The chain runs to 399 residues: Bone morphogenetic protein 8A (399 aa).

Residues methionine 1 to glycine 19 form the signal peptide. Residues glycine 20–arginine 260 constitute a propeptide that is removed on maturation. A glycan (N-linked (GlcNAc...) asparagine) is linked at asparagine 155. Residues arginine 257–phenylalanine 286 are disordered. Disulfide bonds link cysteine 298–cysteine 364, cysteine 327–cysteine 396, and cysteine 331–cysteine 398. Residue asparagine 340 is glycosylated (N-linked (GlcNAc...) asparagine).

This sequence belongs to the TGF-beta family. As to quaternary structure, homodimer; disulfide-linked. In terms of tissue distribution, expressed in testis. expressed in trophoblast cells of the labyrinthine region of the placenta and in the inner root sheath of hair follicles of early postnatal skin. Expressed predominantly in the neonatal mouse spermatogonia.

Its subcellular location is the secreted. Growth factor of the TGF-beta superfamily that plays important role in various biological processes, including spermatogenesis, osteogenesis, steroidogenesis as well as regulation of energy balance. Initiates the canonical BMP signaling cascade by associating with type I receptor BMPR1A and type II receptor BMPR2. Once all three components are bound together in a complex at the cell surface, BMPR2 phosphorylates and activates BMPR1A. In turn, BMPR1A propagates signal by phosphorylating SMAD1/5/8 that travel to the nucleus and act as activators and repressors of transcription of target genes. In addition, activates the SMAD2/3 pathway. This Mus musculus (Mouse) protein is Bone morphogenetic protein 8A (Bmp8a).